A 1034-amino-acid chain; its full sequence is MERARRLAMLGRLVSQTKHNPSISSSALCSPSRYVSSLSPYVCSGTNVRSDRNLNGFGSQVRTISVEALKPSDTFPRRHNSATPEEQTKMAEFVGFSNLDSLIDATVPKAIRLDSMKYSKFDEGLTESQMIAHMQDLASKNKIFKSFIGMGYYNTSVPTVILRNIMENPGWYTQYTPYQAEIAQGRLESLLNFQTMITDLTGLPMSNASLLDEGTAAAEAMAMCNNIQKGKKKTFIIASNCHPQTIDICKTRADGFDLKVVTSDLKDFDYSSGDVCGVLVQYPGTEGELLDYSEFIKNAHANGVKVVMASDLLALTILKPPGELGADIVVGSAQRFGVPMGYGGPHAAFLATSQEYKRMMPGRIIGVSVDSSGKPALRMAMQTREQHIRRDKATSNICTAQALLANMAAMYGVYHGPEGLKTIAKRVHGLAGTFAAGLKKLGTVQVQDLPFFDTVKVTCADSKAIAEEAYKHKMNLRIVDKNTITVAFDETTTIEDVDTLFKVFALGKPVTFTAASIAPEVQDAIPSGLVRETPYLTHPIFNMYHTEHELLRYISKLQSKDLSLCHSMIPLGSCTMKLNATTEMMPVTWPAFADIHPFAPTEQAQGYQEMFKNLGDLLCTITGFDSFSLQPNAGAAGEYAGLMVIQAYHMARGDHHRKVCIIPVSAHGTNPASAAMCGMKIITVGTDSKGNINIEELRKAAEANKENLSALMVTYPSTHGVYEEGIDEICKIIHDNGGQVYMDGANMNAQVGLTSPGWIGADVCHLNLHKTFCIPHGGGGPGMGPIGVKKHLAPYLPSHPVVPTGGIPAPEQSQPLGTIAAAPWGSALILPISYTYIAMMGSQGITNASKIAILNANYMAKRLENHYPILFRGVNGTVAHEFIVDLRPLKTTAGIEPEDVAKRLIDYGFHGPTMSWPVPGTLMIEPTESESKAELDRFCDALISIRQEIAEIEKGTVDFNNNVIKGAPHPPQLLMADKWTKPYSREYAAYPAPWLRAAKFWPTTCRVDNVYGDRNLICTLQPPQEYEEKAEATA.

Residues 1–63 (MERARRLAML…LNGFGSQVRT (63 aa)) constitute a mitochondrion transit peptide. Lys-770 carries the post-translational modification N6-(pyridoxal phosphate)lysine.

The protein belongs to the GcvP family. Homodimer. The glycine cleavage system is composed of four proteins: P, T, L and H. Pyridoxal 5'-phosphate serves as cofactor.

It is found in the mitochondrion. The enzyme catalyses N(6)-[(R)-lipoyl]-L-lysyl-[glycine-cleavage complex H protein] + glycine + H(+) = N(6)-[(R)-S(8)-aminomethyldihydrolipoyl]-L-lysyl-[glycine-cleavage complex H protein] + CO2. Its function is as follows. The glycine cleavage system catalyzes the degradation of glycine. The P protein binds the alpha-amino group of glycine through its pyridoxal phosphate cofactor; CO(2) is released and the remaining methylamine moiety is then transferred to the lipoamide cofactor of the H protein. The polypeptide is Glycine dehydrogenase (decarboxylating), mitochondrial (GDCSPA) (Flaveria trinervia (Clustered yellowtops)).